We begin with the raw amino-acid sequence, 501 residues long: Cytochrome P450 71B3 (501 aa).

Residues 2 to 22 (SILLYFFFLPVILSLIFMKKF) traverse the membrane as a helical segment. A heme-binding site is contributed by Cys445.

The protein belongs to the cytochrome P450 family. Heme serves as cofactor.

It localises to the membrane. This is Cytochrome P450 71B3 (CYP71B3) from Arabidopsis thaliana (Mouse-ear cress).